A 384-amino-acid chain; its full sequence is S-adenosylmethionine synthase (384 aa).

His15 serves as a coordination point for ATP. Residue Asp17 participates in Mg(2+) binding. Residue Glu43 participates in K(+) binding. L-methionine contacts are provided by Glu56 and Gln99. Residues 99 to 109 (QSPDINQGVDK) form a flexible loop region. Residues 164 to 166 (DAK), 230 to 231 (RF), Asp239, 245 to 246 (RK), Ala262, and Lys266 each bind ATP. Asp239 provides a ligand contact to L-methionine. Position 270 (Lys270) interacts with L-methionine.

It belongs to the AdoMet synthase family. In terms of assembly, homotetramer; dimer of dimers. Mg(2+) serves as cofactor. It depends on K(+) as a cofactor.

The protein resides in the cytoplasm. The catalysed reaction is L-methionine + ATP + H2O = S-adenosyl-L-methionine + phosphate + diphosphate. It participates in amino-acid biosynthesis; S-adenosyl-L-methionine biosynthesis; S-adenosyl-L-methionine from L-methionine: step 1/1. Catalyzes the formation of S-adenosylmethionine (AdoMet) from methionine and ATP. The overall synthetic reaction is composed of two sequential steps, AdoMet formation and the subsequent tripolyphosphate hydrolysis which occurs prior to release of AdoMet from the enzyme. This is S-adenosylmethionine synthase from Aliivibrio fischeri (strain ATCC 700601 / ES114) (Vibrio fischeri).